We begin with the raw amino-acid sequence, 371 residues long: MRLRSIQFENFRNHRSFSFEPEDGINLIYGQNGSGKTSILEGIHYCALTKGFVSAADGECLSFSAGYFLLTALFESSSGIETAVRLSYTKESGKKLQIDGNELKPFSLHIGSIPCISFSPPEIVIVSGPPGERRRFLDNAVCQSDRRYLDNLLIYRRLLQQRNALLQQLSQSPGKDRSMLQLWSENLASSAASVTAGRVRFLAEFHPFVELLHRDLSGGQMPSIEYRSTIGRLLEPVPESELRERFLQRFQENEQQEILRGQTLSGPHRDELIFLSDGRESKRYSSQGQQRTFLISLKLALFQYFNEKIGETPICLLDDIFSELDGKRTAAVLDILEGCGQTLISSADLKNHPGSAVHHLQTTPSTRNSEV.

An ATP-binding site is contributed by 30 to 37 (GQNGSGKT).

It belongs to the RecF family.

The protein localises to the cytoplasm. Functionally, the RecF protein is involved in DNA metabolism; it is required for DNA replication and normal SOS inducibility. RecF binds preferentially to single-stranded, linear DNA. It also seems to bind ATP. The polypeptide is DNA replication and repair protein RecF (Chlorobium phaeovibrioides (strain DSM 265 / 1930) (Prosthecochloris vibrioformis (strain DSM 265))).